Consider the following 229-residue polypeptide: Orotidine 5'-phosphate decarboxylase (229 aa).

Residues Asp10, Lys32, 59-68 (DLKFHDIPNT), Thr119, Arg180, Gln189, Gly209, and Arg210 each bind substrate. Lys61 serves as the catalytic Proton donor.

The protein belongs to the OMP decarboxylase family. Type 1 subfamily. Homodimer.

The catalysed reaction is orotidine 5'-phosphate + H(+) = UMP + CO2. The protein operates within pyrimidine metabolism; UMP biosynthesis via de novo pathway; UMP from orotate: step 2/2. Catalyzes the decarboxylation of orotidine 5'-monophosphate (OMP) to uridine 5'-monophosphate (UMP). The sequence is that of Orotidine 5'-phosphate decarboxylase from Legionella pneumophila (strain Corby).